The chain runs to 134 residues: MDQVVVFQKMFEQVRKEQNFSWFYSELKHHRIAHYIYYLATDNIRIITHDDTVLLLRGTRNLLKVSTTKNPAKIKEAALLHICGKSTFREYCSTLAGAGVFRWVTDVNHNKRSYYAIDNTLLYIEDVENNKPLI.

To E.coli YbcV and YdfO.

This is an uncharacterized protein from Escherichia coli (strain K12).